The following is a 588-amino-acid chain: Disabled homolog 1 (588 aa).

The tract at residues 1 to 26 (MSTETELQVAVKTSAKKDSRKKGQDR) is disordered. A compositionally biased stretch (basic and acidic residues) spans 15–26 (AKKDSRKKGQDR). The region spanning 36-189 (KGEGVRYKAK…CEQAVYQTIL (154 aa)) is the PID domain. A phosphotyrosine mark is found at Y198, Y220, and Y232. 3 disordered regions span residues 417-443 (LTPLATVPGTSDSTRSSPQTDKPRQKM), 451-470 (FQMAQPPPVPSRKPDQPSLT), and 502-588 (LTPV…QAGS). Residues 424–436 (PGTSDSTRSSPQT) are compositionally biased toward polar residues. 2 stretches are compositionally biased toward low complexity: residues 503–512 (TPVTSTTPST) and 520–534 (PRQSSPSKSSASHAS). S524 carries the post-translational modification Phosphoserine; by CDK5. Residues 537–546 (TTDDIFEEGF) are compositionally biased toward acidic residues.

As to quaternary structure, associates with the SH2 domains of SRC, FYN and ABL. Interacts (phosphorylated on tyrosine residues) with CRK and CRKL (via respective SH2 domain). Interacts with SIAH1, LRP8 and VLDLR. Interacts with LRP1. Interacts with APLP1 (via NPXY motif). Interacts with DAB2IP. Interacts with ZSWIM8. Post-translationally, phosphorylated by FYN on Tyr-198 and Tyr-220 upon reelin induction in embryonic neurons. Also phosphorylated on Ser-524 independently of reelin signaling. Ubiquitinated by various cullin-5-RING E3 ubiquitin-protein ligase complexes (ECS complexes) following ligand-binding and phosphorylation, leading to its degradation. Ubiquitinated by the ECS(SOCS7) complex in the cortical plate of the developing cerebral cortex following ligand-binding and phosphorylation by FYN, leading to its degradation by the proteasome. Recognized by ZSWIM8 through a disorder targets misorder mechanism that eliminates misfolded DAB1 via ubiquitination and proteasomal degradation. Mainly expressed in brain.

It localises to the cytoplasm. In terms of biological role, signaling adapter of the reelin-mediated signaling pathway, which regulates the migration and differentiation of postmitotic neurons during brain development. Mediates intracellular transduction of Reelin signaling following reelin (RELN)-binding to its receptor: acts by docking proteins through its phosphotyrosine residues and PID domain. This Homo sapiens (Human) protein is Disabled homolog 1 (DAB1).